The chain runs to 2345 residues: Acetyl-CoA carboxylase 1 (2345 aa).

Met-1 carries the N-acetylmethionine modification. Residues Ser-5, Ser-23, Ser-25, Ser-29, Ser-34, Ser-47, Ser-49, and Ser-52 each carry the phosphoserine modification. Thr-57 bears the Phosphothreonine mark. 2 positions are modified to phosphoserine: Ser-77 and Ser-79. The residue at position 79 (Ser-79) is a Phosphoserine; by AMPK. The region spanning 116–617 is the Biotin carboxylation domain; it reads VIEKVLIANN…DTGWLDRLIA (502 aa). Residues 274–465 enclose the ATP-grasp domain; it reads SKRILNVPQD…LPAAQLQIAM (192 aa). 300–357 serves as a coordination point for ATP; it reads AEEVGYPVMIKASEGGGGKGIRKVNNADDFPNLFRQVQAEVPGSPIFVMRLAKQSRHL. Positions 423, 436, and 438 each coordinate Mg(2+). Mn(2+) contacts are provided by Glu-423, Glu-436, and Asn-438. Arg-440 is a catalytic residue. A Phosphothreonine modification is found at Thr-609. Residues 744–818 form the Biotinyl-binding domain; sequence FEKENDPSVM…DPGCVIAKMQ (75 aa). Lys-785 is subject to N6-biotinyllysine. Phosphoserine is present on residues Ser-834, Ser-1200, Ser-1215, and Ser-1217. At Thr-1226 the chain carries Phosphothreonine. Phosphoserine occurs at positions 1258, 1262, and 1272. Lys-1333 is modified (N6-acetyllysine). The CoA carboxyltransferase N-terminal domain maps to 1575–1913; it reads PYVTKDLLQS…SVHSSVPLLN (339 aa). The carboxyltransferase stretch occupies residues 1575–2233; that stretch reads PYVTKDLLQS…EDLVKKKIHN (659 aa). Positions 1822, 2126, and 2128 each coordinate CoA. A CoA carboxyltransferase C-terminal domain is found at 1917-2233; it reads PIDRIIEFVP…EDLVKKKIHN (317 aa). Thr-2152 is subject to Phosphothreonine.

In terms of assembly, monomer, homodimer, and homotetramer. Can form filamentous polymers. Interacts in its inactive phosphorylated form with the BRCT domains of BRCA1 which prevents ACACA dephosphorylation and inhibits lipid synthesis. Interacts with MID1IP1; interaction with MID1IP1 promotes oligomerization and increases its activity. It depends on Mg(2+) as a cofactor. The cofactor is Mn(2+). Biotin serves as cofactor. Post-translationally, phosphorylation on Ser-1262 is required for interaction with BRCA1. Phosphorylation at Ser-79 by AMPK inactivates enzyme activity. In terms of processing, the biotin cofactor is covalently attached to the central biotinyl-binding domain and is required for the catalytic activity.

It is found in the cytoplasm. The protein localises to the cytosol. It carries out the reaction hydrogencarbonate + acetyl-CoA + ATP = malonyl-CoA + ADP + phosphate + H(+). It participates in lipid metabolism; malonyl-CoA biosynthesis; malonyl-CoA from acetyl-CoA: step 1/1. Its activity is regulated as follows. Inhibited by phosphorylation. Citrate promotes oligomerization of the protein into filaments that correspond to the most active form of the carboxylase. Its function is as follows. Cytosolic enzyme that catalyzes the carboxylation of acetyl-CoA to malonyl-CoA, the first and rate-limiting step of de novo fatty acid biosynthesis. This is a 2 steps reaction starting with the ATP-dependent carboxylation of the biotin carried by the biotin carboxyl carrier (BCC) domain followed by the transfer of the carboxyl group from carboxylated biotin to acetyl-CoA. This chain is Acetyl-CoA carboxylase 1, found in Mus musculus (Mouse).